The chain runs to 491 residues: uncharacterized protein (491 aa).

ATP is bound at residue 266 to 273 (GIQGTGKS).

The protein belongs to the AAA ATPase family. Highly divergent.

Its subcellular location is the plastid. It localises to the chloroplast. This is an uncharacterized protein from Porphyra purpurea (Red seaweed).